Reading from the N-terminus, the 115-residue chain is Thioredoxin-1 (115 aa).

One can recognise a Thioredoxin domain in the interval 2–114 (LKRCNFKNQV…RQKVLEHVSA (113 aa)). Catalysis depends on nucleophile residues cysteine 39 and cysteine 42. An intrachain disulfide couples cysteine 39 to cysteine 42.

This sequence belongs to the thioredoxin family. In terms of tissue distribution, expressed in ASJ and ASI ciliated sensory neurons. Expressed in the intestine (at protein level).

Its function is as follows. Participates in various redox reactions through the reversible oxidation of its active center dithiol to a disulfide and catalyzes dithiol-disulfide exchange reactions. Shown to facilitate the reduction of insulin disulfide bonds. Might play a role in the reversible nitrosylation of cysteine residues in target proteins, and thereby contributing to the response to intracellular nitric oxide. Shapes the ASJ sensory neuron biphasic response to nitric oxide (NO) exposure; trans-nitrosylation activity might inhibit calcium flux to the cytoplasm in ASJ neurons when exposed to a NO stimulus, whereas de-nitrosylation activity might promote calcium flux when NO is diminished. By regulating the NO-induced ASJ sensory neuron activity, mediates the avoidance response to NO-producing organisms like P.aeruginosa. Positively regulates life span extension under normal and caloric restriction conditions, dauer formation and the oxidative stress response. Contributes to the down-regulation of expression of the insulin-like neuropeptide daf-28 in the ASJ neurons in a redox-independent fashion, thereby promoting dauer formation. Negatively regulates the nuclear localization of the intestinal skn-1 transcription factor in a p38 MAPK pathway-dependent and redox-independent fashion. The chain is Thioredoxin-1 (trx-1) from Caenorhabditis elegans.